Here is a 312-residue protein sequence, read N- to C-terminus: Homeobox-leucine zipper protein ATHB-5 (312 aa).

Residues 1–33 (MKRSRGSSDSLSGFLPIRHSTTDKQISPRPTTT) form a disordered region. Residues 23–33 (DKQISPRPTTT) are compositionally biased toward polar residues. Residues 69–128 (AAEKKRRLGVEQVKALEKNFEIDNKLEPERKVKLAQELGLQPRQVAIWFQNRRARWKTKQ) constitute a DNA-binding region (homeobox). The tract at residues 129–164 (LERDYGVLKSNFDALKRNRDSLQRDNDSLLGQIKEL) is leucine-zipper.

Belongs to the HD-ZIP homeobox family. Class I subfamily. As to quaternary structure, interacts with DNA as homodimer. Widely expressed.

The protein localises to the nucleus. In terms of biological role, probable transcription factor that acts as a positive regulator of ABA-responsiveness, mediating the inhibitory effect of ABA on growth during seedling establishment. Binds to the DNA sequence 5'-CAATNATTG-3'. The chain is Homeobox-leucine zipper protein ATHB-5 (ATHB-5) from Arabidopsis thaliana (Mouse-ear cress).